A 465-amino-acid chain; its full sequence is Paired box protein Pax-8 (465 aa).

Residues 26–152 (GHGGLNQLGG…SSINRIIRTK (127 aa)) constitute a DNA-binding region (paired). A PAI subdomain region spans residues 29-85 (GLNQLGGAFVNGRPLPEVVRQRIVDLAHQGVRPCDISRQLRVSHGCVSKILGRYYET). The tract at residues 104–152 (KVVEKIGDYKRQNPTMFAWEIRDRLLTDGVCDNDTVPSVSSINRIIRTK) is RED subdomain. Residues 206–227 (PSADGKRKLDDSDQESCRLSID) form a disordered region.

In terms of tissue distribution, expression starts at late gastrula stages in cells fated to become the primordia of the otic system and the pronephric kidney. Expression is maintained in these two structures through late tailbud stages. Does not appear to be expressed in the thyroid gland.

Its subcellular location is the nucleus. Its function is as follows. Probable transcription factor. Involved in kidney development, acting synergistically with lhx1/lim-1 to establish the pronephric primordium in late gastrulae/early neurulae. The protein is Paired box protein Pax-8 of Xenopus laevis (African clawed frog).